A 55-amino-acid polypeptide reads, in one-letter code: Conotoxin Cal6.40 (55 aa).

The signal sequence occupies residues 1 to 21 (MSGSGVLLLTLLLLVPLSALA). Intrachain disulfides connect Cys-24/Cys-36, Cys-29/Cys-41, and Cys-35/Cys-50.

In terms of tissue distribution, expressed by the venom duct.

Its subcellular location is the secreted. In terms of biological role, probable neurotoxin. This Californiconus californicus (California cone) protein is Conotoxin Cal6.40.